The primary structure comprises 1050 residues: Self-sufficient cytochrome P450 monooxygenase CYP505E3 (1050 aa).

Cys-406 provides a ligand contact to heme. A compositionally biased stretch (polar residues) spans 459-481 (RGQSATGLSQGSMSASGATSSVA). Residues 459-495 (RGQSATGLSQGSMSASGATSSVASPGPPAATGAQSNP) are disordered. Residues 501-641 (ISFFYGSNSG…DLELWEETNL (141 aa)) enclose the Flavodoxin-like domain. FMN-binding positions include 507 to 511 (SNSGT) and 585 to 617 (VFGC…TRLT). Residues 679–907 (RGLVEAKVTA…RPAKDAFHLP (229 aa)) enclose the FAD-binding FR-type domain.

In the N-terminal section; belongs to the cytochrome P450 family. The cofactor is FAD. Requires FMN as cofactor. Heme is required as a cofactor.

The enzyme catalyses 2 oxidized [cytochrome P450] + NADPH = 2 reduced [cytochrome P450] + NADP(+) + H(+). It carries out the reaction an organic molecule + reduced [NADPH--hemoprotein reductase] + O2 = an alcohol + oxidized [NADPH--hemoprotein reductase] + H2O + H(+). It catalyses the reaction decane + reduced [NADPH--hemoprotein reductase] + O2 = 3-decanol + oxidized [NADPH--hemoprotein reductase] + H2O + H(+). The catalysed reaction is dodecane + reduced [NADPH--hemoprotein reductase] + O2 = 5-dodecanol + oxidized [NADPH--hemoprotein reductase] + H2O + H(+). The enzyme catalyses tetradecane + reduced [NADPH--hemoprotein reductase] + O2 = 7-tetradecanol + oxidized [NADPH--hemoprotein reductase] + H2O + H(+). It carries out the reaction hexadecane + reduced [NADPH--hemoprotein reductase] + O2 = 9-hexadecanol + oxidized [NADPH--hemoprotein reductase] + H2O + H(+). It catalyses the reaction dodecanoate + reduced [NADPH--hemoprotein reductase] + O2 = 5-hydroxydodecanoate + oxidized [NADPH--hemoprotein reductase] + H2O + H(+). The catalysed reaction is tetradecanoate + reduced [NADPH--hemoprotein reductase] + O2 = 7-hydroxytetradecanoate + oxidized [NADPH--hemoprotein reductase] + H2O + H(+). The enzyme catalyses hexadecanoate + reduced [NADPH--hemoprotein reductase] + O2 = 9-hydroxyhexadecanoate + oxidized [NADPH--hemoprotein reductase] + H2O + H(+). It carries out the reaction decan-1-ol + reduced [NADPH--hemoprotein reductase] + O2 = 1,3-decanediol + oxidized [NADPH--hemoprotein reductase] + H2O + H(+). It catalyses the reaction decan-1-ol + reduced [NADPH--hemoprotein reductase] + O2 = 1,7-decanediol + oxidized [NADPH--hemoprotein reductase] + H2O + H(+). The catalysed reaction is dodecan-1-ol + reduced [NADPH--hemoprotein reductase] + O2 = 1,5-dodecanediol + oxidized [NADPH--hemoprotein reductase] + H2O + H(+). The enzyme catalyses dodecan-1-ol + reduced [NADPH--hemoprotein reductase] + O2 = 1,4-dodecanediol + oxidized [NADPH--hemoprotein reductase] + H2O + H(+). It carries out the reaction dodecan-1-ol + reduced [NADPH--hemoprotein reductase] + O2 = 1,6-dodecanediol + oxidized [NADPH--hemoprotein reductase] + H2O + H(+). Its function is as follows. Self-sufficient cytochrome P450 monooxygenase that catalyzes the regioselective in-chain hydroxylation of alkanes, fatty alcohols, and fatty acids at the omega-7 position. Performs hydroxylation of C10-C16 n-alkanes and C12 and C14 fatty alcohols; and thereby enables the one step biocatalytic synthesis of rare alcohols such as 5-dodecanol and 7-tetradecanol. Converts 1-dodecanol into 1,5-dodecanediol as major product with very little sub-terminally hydroxylated products with the 1,4-dodecanediol and 1,6-dodecanediol more abundant. Does not use hexadecanediol nor decanoic acid as substrates. Converts dodecanoic acid to 5-hydroxydodecanoic acid which can be further converted into delta-dodecalactone by lactonization of the 5-hydroxy acid at low pH. Also gives sub-terminal hydroxylation of dodecanoic acid with 9-hydroxydodecanoic acid being the second most abundant product. The C14 and C16 fatty acids are double hydroxylated to yield dihydroxy acids hydroxylated at both the omega-7 position and a sub-terminal position (omega-1, omega-2, or omega-3). The polypeptide is Self-sufficient cytochrome P450 monooxygenase CYP505E3 (Aspergillus terreus (strain NIH 2624 / FGSC A1156)).